The following is a 290-amino-acid chain: UPF0761 membrane protein YihY (290 aa).

Residues Met-1 to Ser-43 lie on the Cytoplasmic side of the membrane. The chain crosses the membrane as a helical span at residues Leu-44 to Phe-64. Residues Ser-65–Ala-103 are Periplasmic-facing. The helical transmembrane segment at Val-104–Leu-124 threads the bilayer. Residues Asn-125–Ser-139 are Cytoplasmic-facing. The chain crosses the membrane as a helical span at residues Phe-140 to Ile-160. The Periplasmic portion of the chain corresponds to Ser-161–Asn-179. A helical transmembrane segment spans residues Val-180–Val-200. The Cytoplasmic portion of the chain corresponds to Pro-201–Asp-209. A helical membrane pass occupies residues Ala-210–Leu-230. Over Tyr-231 to Gly-243 the chain is Periplasmic. A helical membrane pass occupies residues Val-244–Leu-264. At Gly-265 to Pro-290 the chain is on the cytoplasmic side.

This sequence belongs to the UPF0761 family.

Its subcellular location is the cell inner membrane. This chain is UPF0761 membrane protein YihY, found in Salmonella typhimurium (strain LT2 / SGSC1412 / ATCC 700720).